We begin with the raw amino-acid sequence, 226 residues long: Protein FMP52-1, mitochondrial (226 aa).

The N-terminal 43 residues, 1 to 43 (MSAFVLGSTGLVGLQILKVLDSSTAFKKVSTVSRRLPSVTSGK), are a transit peptide targeting the mitochondrion.

This sequence belongs to the FMP52 family.

It is found in the mitochondrion outer membrane. The chain is Protein FMP52-1, mitochondrial (FMP521) from Scheffersomyces stipitis (strain ATCC 58785 / CBS 6054 / NBRC 10063 / NRRL Y-11545) (Yeast).